The following is a 135-amino-acid chain: Universal stress protein Aq_178 (135 aa).

It belongs to the universal stress protein A family.

This is Universal stress protein Aq_178 from Aquifex aeolicus (strain VF5).